Reading from the N-terminus, the 89-residue chain is Small ribosomal subunit protein uS15 (89 aa).

Belongs to the universal ribosomal protein uS15 family. Part of the 30S ribosomal subunit. Forms a bridge to the 50S subunit in the 70S ribosome, contacting the 23S rRNA.

In terms of biological role, one of the primary rRNA binding proteins, it binds directly to 16S rRNA where it helps nucleate assembly of the platform of the 30S subunit by binding and bridging several RNA helices of the 16S rRNA. Functionally, forms an intersubunit bridge (bridge B4) with the 23S rRNA of the 50S subunit in the ribosome. The chain is Small ribosomal subunit protein uS15 from Oenococcus oeni (strain ATCC BAA-331 / PSU-1).